Consider the following 495-residue polypeptide: Putative aldehyde dehydrogenase AldA (495 aa).

212-218 (GKGSESG) provides a ligand contact to NAD(+). Active-site residues include glutamate 256 and cysteine 290.

This sequence belongs to the aldehyde dehydrogenase family.

The catalysed reaction is an aldehyde + NAD(+) + H2O = a carboxylate + NADH + 2 H(+). The polypeptide is Putative aldehyde dehydrogenase AldA (aldA) (Staphylococcus aureus (strain MRSA252)).